Consider the following 173-residue polypeptide: MQDEFKTDTPRTEAGSEKETMPSMEELLKAAELAAAEHHDAWLRAKAETENMRRRAAEDVDKARKFAVESFAGELLAVKDSLEAALAAESPSVDNLKDGVTLTLKQLSAVFGKFNLHDIEPLGEKFDPHLHQAIQVVESEQPANTVVTVLQKGYRLHDRTLRPALVMVAKGKD.

Basic and acidic residues predominate over residues 1–20; sequence MQDEFKTDTPRTEAGSEKET. Residues 1 to 23 are disordered; the sequence is MQDEFKTDTPRTEAGSEKETMPS.

Belongs to the GrpE family. As to quaternary structure, homodimer.

The protein resides in the cytoplasm. In terms of biological role, participates actively in the response to hyperosmotic and heat shock by preventing the aggregation of stress-denatured proteins, in association with DnaK and GrpE. It is the nucleotide exchange factor for DnaK and may function as a thermosensor. Unfolded proteins bind initially to DnaJ; upon interaction with the DnaJ-bound protein, DnaK hydrolyzes its bound ATP, resulting in the formation of a stable complex. GrpE releases ADP from DnaK; ATP binding to DnaK triggers the release of the substrate protein, thus completing the reaction cycle. Several rounds of ATP-dependent interactions between DnaJ, DnaK and GrpE are required for fully efficient folding. The protein is Protein GrpE of Thiobacillus denitrificans (strain ATCC 25259 / T1).